Here is a 445-residue protein sequence, read N- to C-terminus: Xylose isomerase (445 aa).

Catalysis depends on residues His107 and Asp110. Mg(2+) is bound by residues Glu238, Glu274, His277, Asp302, Asp313, Asp315, and Asp345.

This sequence belongs to the xylose isomerase family. In terms of assembly, homotetramer. Mg(2+) is required as a cofactor.

Its subcellular location is the cytoplasm. The catalysed reaction is alpha-D-xylose = alpha-D-xylulofuranose. This is Xylose isomerase (xylA) from Bacillus spizizenii (strain ATCC 23059 / NRRL B-14472 / W23) (Bacillus subtilis subsp. spizizenii).